A 200-amino-acid polypeptide reads, in one-letter code: Serine/threonine-protein kinase mos (200 aa).

A Protein kinase domain is found at 2 to 200 (LCLLQPLGSG…ELLKGERVTA (199 aa)). ATP is bound by residues 8–16 (LGSGGFGSV) and K29. The Proton acceptor role is filled by D143.

It belongs to the protein kinase superfamily. Ser/Thr protein kinase family.

It catalyses the reaction L-seryl-[protein] + ATP = O-phospho-L-seryl-[protein] + ADP + H(+). It carries out the reaction L-threonyl-[protein] + ATP = O-phospho-L-threonyl-[protein] + ADP + H(+). The chain is Serine/threonine-protein kinase mos (MOS) from Ciconia nigra (Black stork).